Consider the following 178-residue polypeptide: Ribosome maturation factor RimM (178 aa).

The 78-residue stretch at 93 to 170 (EGSYYYHELR…ALTADAPAGL (78 aa)) folds into the PRC barrel domain.

The protein belongs to the RimM family. As to quaternary structure, binds ribosomal protein uS19.

It is found in the cytoplasm. Its function is as follows. An accessory protein needed during the final step in the assembly of 30S ribosomal subunit, possibly for assembly of the head region. Essential for efficient processing of 16S rRNA. May be needed both before and after RbfA during the maturation of 16S rRNA. It has affinity for free ribosomal 30S subunits but not for 70S ribosomes. This Deinococcus geothermalis (strain DSM 11300 / CIP 105573 / AG-3a) protein is Ribosome maturation factor RimM.